The sequence spans 1375 residues: DNA-directed RNA polymerase subunit beta (1375 aa).

This sequence belongs to the RNA polymerase beta chain family. As to quaternary structure, the RNAP catalytic core consists of 2 alpha, 1 beta, 1 beta' and 1 omega subunit. When a sigma factor is associated with the core the holoenzyme is formed, which can initiate transcription.

The enzyme catalyses RNA(n) + a ribonucleoside 5'-triphosphate = RNA(n+1) + diphosphate. In terms of biological role, DNA-dependent RNA polymerase catalyzes the transcription of DNA into RNA using the four ribonucleoside triphosphates as substrates. The sequence is that of DNA-directed RNA polymerase subunit beta from Methylorubrum populi (strain ATCC BAA-705 / NCIMB 13946 / BJ001) (Methylobacterium populi).